A 282-amino-acid polypeptide reads, in one-letter code: MGQENSKCPHQSLAEKRYKVERPKTKKVSSGSATERCLSTQSDEKNAARRLTVSSCDVSAEDDLPEIKKLSVCEPNEDEATSMTNAAAAAGGAKSKCKHFLTRRERILLEQSWRKTRKTGADHIGSKIFFMVLTAQPDIKAIFGLEKIPTGRLKYDPRFRQHALVYTKTLDFVIRNLDYPGKLEVYFENLGKRHVAMQGRGFEPGYWETFAECMTQAAVEWEANRQRPTLGAWRNLISCIISFMRRGFDEENGKKKQYSYNVQGFSSNRARRSISPYAPGVH.

Positions 1–46 (MGQENSKCPHQSLAEKRYKVERPKTKKVSSGSATERCLSTQSDEKN) are disordered. A compositionally biased stretch (basic and acidic residues) spans 13 to 23 (LAEKRYKVERP). Residues 28–41 (VSSGSATERCLSTQ) are compositionally biased toward polar residues. The region spanning 100–249 (FLTRRERILL…IISFMRRGFD (150 aa)) is the Globin domain. Heme b-binding residues include H162 and H194.

This sequence belongs to the globin family.

Its function is as follows. Involved in oxidative stress resistance. This Caenorhabditis elegans protein is Globin-related protein glb-13.